We begin with the raw amino-acid sequence, 41 residues long: Submaxillary gland androgen-regulated protein 2, isoform beta (41 aa).

An N-terminal signal peptide occupies residues 1 to 22 (MKALYMVFVLWVLIGCFLRLLK).

It localises to the secreted. In terms of biological role, may play a role in protection or detoxification. In Mus musculus (Mouse), this protein is Submaxillary gland androgen-regulated protein 2, isoform beta (Smr2).